The chain runs to 614 residues: ATP-dependent zinc metalloprotease FtsH (614 aa).

Over 1–5 (MLPIR) the chain is Cytoplasmic. A helical transmembrane segment spans residues 6–26 (WFLALLAVFLAVAGLDLWFSQ). At 27 to 127 (TGARPSSATG…AVSARERTAS (101 aa)) the chain is on the periplasmic side. The chain crosses the membrane as a helical span at residues 128 to 148 (IVHAIVHPLGLITLIVGILFV). At 149-614 (VQRYAGRFTA…AQHPPSALAG (466 aa)) the chain is on the cytoplasmic side. ATP is bound at residue 214–221 (GPPGTGKT). Histidine 436 contributes to the Zn(2+) binding site. Glutamate 437 is an active-site residue. Zn(2+) contacts are provided by histidine 440 and aspartate 513.

This sequence in the central section; belongs to the AAA ATPase family. In the C-terminal section; belongs to the peptidase M41 family. Homohexamer. The cofactor is Zn(2+).

It is found in the cell inner membrane. Functionally, acts as a processive, ATP-dependent zinc metallopeptidase for both cytoplasmic and membrane proteins. Plays a role in the quality control of integral membrane proteins. The protein is ATP-dependent zinc metalloprotease FtsH of Opitutus terrae (strain DSM 11246 / JCM 15787 / PB90-1).